Consider the following 27-residue polypeptide: Phospholipase A2 1 (27 aa).

Belongs to the phospholipase A2 family. Group I subfamily. Ca(2+) is required as a cofactor. Expressed by the venom gland.

It is found in the secreted. It catalyses the reaction a 1,2-diacyl-sn-glycero-3-phosphocholine + H2O = a 1-acyl-sn-glycero-3-phosphocholine + a fatty acid + H(+). In terms of biological role, snake venom phospholipase A2 (PLA2) that inhibits neuromuscular transmission by blocking acetylcholine release from the nerve termini. PLA2 catalyzes the calcium-dependent hydrolysis of the 2-acyl groups in 3-sn-phosphoglycerides. The polypeptide is Phospholipase A2 1 (Micrurus nigrocinctus (Central American coral snake)).